Reading from the N-terminus, the 531-residue chain is Probable rhamnogalacturonate lyase A (531 aa).

The first 20 residues, 1-20 (MLSKTSLLSLLSLAAGVVNA), serve as a signal peptide directing secretion. 2 disulfide bridges follow: cysteine 50/cysteine 93 and cysteine 184/cysteine 193.

It belongs to the polysaccharide lyase 4 family.

The protein localises to the secreted. It catalyses the reaction Endotype eliminative cleavage of L-alpha-rhamnopyranosyl-(1-&gt;4)-alpha-D-galactopyranosyluronic acid bonds of rhamnogalacturonan I domains in ramified hairy regions of pectin leaving L-rhamnopyranose at the reducing end and 4-deoxy-4,5-unsaturated D-galactopyranosyluronic acid at the non-reducing end.. Functionally, pectinolytic enzymes consist of four classes of enzymes: pectin lyase, polygalacturonase, pectin methylesterase and rhamnogalacturonase. Degrades the rhamnogalacturonan I (RG-I) backbone of pectin. In Aspergillus niger (strain ATCC MYA-4892 / CBS 513.88 / FGSC A1513), this protein is Probable rhamnogalacturonate lyase A (rglA).